The following is a 382-amino-acid chain: Succinate--CoA ligase [ADP-forming] subunit beta (382 aa).

In terms of domain architecture, ATP-grasp spans 9 to 240 (KELFSKYGVK…PRDVSEFEMY (232 aa)). ATP-binding positions include K45, 52–54 (GRG), V94, and E99. Mg(2+)-binding residues include N193 and D207. Substrate contacts are provided by residues N260 and 317 to 319 (GIT).

This sequence belongs to the succinate/malate CoA ligase beta subunit family. Heterotetramer of two alpha and two beta subunits. Mg(2+) serves as cofactor.

It carries out the reaction succinate + ATP + CoA = succinyl-CoA + ADP + phosphate. It catalyses the reaction GTP + succinate + CoA = succinyl-CoA + GDP + phosphate. The protein operates within carbohydrate metabolism; tricarboxylic acid cycle; succinate from succinyl-CoA (ligase route): step 1/1. Functionally, succinyl-CoA synthetase functions in the citric acid cycle (TCA), coupling the hydrolysis of succinyl-CoA to the synthesis of either ATP or GTP and thus represents the only step of substrate-level phosphorylation in the TCA. The beta subunit provides nucleotide specificity of the enzyme and binds the substrate succinate, while the binding sites for coenzyme A and phosphate are found in the alpha subunit. In Pyrobaculum arsenaticum (strain DSM 13514 / JCM 11321 / PZ6), this protein is Succinate--CoA ligase [ADP-forming] subunit beta.